A 446-amino-acid chain; its full sequence is MMMPDDHHPLSFPSYVLHQEHIAPNPNPNPNPTSSNSAKRKRNLPGNPDPDAEVIALSPNSLMTTNRFICEVCNKGFKRDQNLQLHRRGHNLPWKLKQRTNKEQVKKKVYICPEKTCVHHDPARALGDLTGIKKHFSRKHGEKKWKCDKCSKKYAVMSDWKAHSKICGTKEYRCDCGTLFSRKDSFITHRAFCDALAEESARFVSVPPAPAYLNNALDVEVNHGNINQNHQQRQLNTTSSQLDQPGFNTNRNNIAFLGQTLPTNVFASSSSPSPRSASDSLQNLWHLQGQSSHQWLLNENNNNNNNILQRGISKNQEEHEMKNVISNGSLFSSEARNNTNNYNQNGGQIASMSATALLQKAAQMGSKRSSSSSSNSKTFGLMTSIFNNKQAENIKTKEVDERGFTRDFLGVGSQHRSWPLLMVNHNLPDSSPPASTDGTPTADMNQ.

Residues 20–53 (EHIAPNPNPNPNPTSSNSAKRKRNLPGNPDPDAE) form a disordered region. The residue at position 58 (S58) is a Phosphoserine. 2 C2H2-type zinc fingers span residues 68-90 (FICEVCNKGFKRDQNLQLHRRGH) and 110-140 (YICPEKTCVHHDPARALGDLTGIKKHFSRKH). The short motif at 132 to 139 (IKKHFSRK) is the Nuclear localization signal element. A C2H2-type 2; degenerate zinc finger spans residues 145-168 (WKCDKCSKKYAVMSDWKAHSKICG). C147, C150, H163, C167, C174, C176, H189, and C193 together coordinate Zn(2+). The CCHC-type 2; atypical zinc finger occupies 172–195 (YRCDCGTLFSRKDSFITHRAFCDA). The interval 182–194 (RKDSFITHRAFCD) is SHR-binding. The tract at residues 425–446 (HNLPDSSPPASTDGTPTADMNQ) is disordered. A compositionally biased stretch (polar residues) spans 427-446 (LPDSSPPASTDGTPTADMNQ).

In terms of assembly, binds to RGA and SCL3 competitively in the nucleus. As to expression, expressed in roots, especially in vascular initials, cortex, endodermis, and quiescent center (QC).

The protein resides in the nucleus. Transcription factor that, together with JKD, regulates tissue boundaries and asymmetric cell division in roots by a rapid up-regulation of 'SCARECROW' (SCR), thus controlling the nuclear localization of 'SHORT-ROOT' (SHR) and restricting its action. Confines CYCD6 expression to the cortex-endodermis initial/daughter (CEI/CEID) tissues. Binds DNA via its zinc fingers. Recognizes and binds to SCL3 promoter sequence 5'-AGACAA-3' to promote its expression when in complex with RGA. The sequence is that of Zinc finger protein BALDIBIS from Arabidopsis thaliana (Mouse-ear cress).